Consider the following 540-residue polypeptide: Chaperonin GroEL (540 aa).

ATP contacts are provided by residues 30–33, Lys51, 87–91, Gly415, 479–481, and Asp495; these read TLGP, DGTTT, and NAA.

Belongs to the chaperonin (HSP60) family. Forms a cylinder of 14 subunits composed of two heptameric rings stacked back-to-back. Interacts with the co-chaperonin GroES.

The protein localises to the cytoplasm. It catalyses the reaction ATP + H2O + a folded polypeptide = ADP + phosphate + an unfolded polypeptide.. In terms of biological role, together with its co-chaperonin GroES, plays an essential role in assisting protein folding. The GroEL-GroES system forms a nano-cage that allows encapsulation of the non-native substrate proteins and provides a physical environment optimized to promote and accelerate protein folding. This chain is Chaperonin GroEL, found in Raoultella planticola (Klebsiella planticola).